The sequence spans 274 residues: 2-dehydro-3-deoxyphosphooctonate aldolase (274 aa).

The protein belongs to the KdsA family.

The protein resides in the cytoplasm. The catalysed reaction is D-arabinose 5-phosphate + phosphoenolpyruvate + H2O = 3-deoxy-alpha-D-manno-2-octulosonate-8-phosphate + phosphate. Its pathway is carbohydrate biosynthesis; 3-deoxy-D-manno-octulosonate biosynthesis; 3-deoxy-D-manno-octulosonate from D-ribulose 5-phosphate: step 2/3. It functions in the pathway bacterial outer membrane biogenesis; lipopolysaccharide biosynthesis. This chain is 2-dehydro-3-deoxyphosphooctonate aldolase, found in Rickettsia typhi (strain ATCC VR-144 / Wilmington).